Reading from the N-terminus, the 363-residue chain is MARSLTILAIVFAVATARVTKSESPKEILAQVNKDSFGNSILSVLQLQLATGGPVGEIQILLNNIASQLNGDQKKADKVHESDTVAFEKIIADLEQEIAYHQTQIVALSNLRDSTTEALGEAEVEVRVVTSDIANNEKSFADESATRQSQHDTWVRKDAEHVDQMEAIDEASKIVQHLQAGVAFAQLKSRFEKVQAKLMESKHALFKPLINALTQLASKVDNKSIIKILELLAQIRQQLVASRASLLATEERQAANWEVQSSHLQEEHKRLVERKAFLENSIVQFKVTIQEAVEDLEDQTLFLEDAEDSLAIQERWAAEQESQYEAQTFEREQQLEVVERLQEVLTQKLSAASEFLQVREEVF.

Residues 1-17 (MARSLTILAIVFAVATA) form the signal peptide. The propeptide occupies 18–52 (RVTKSESPKEILAQVNKDSFGNSILSVLQLQLATG). Residues 85–119 (VAFEKIIADLEQEIAYHQTQIVALSNLRDSTTEAL) adopt a coiled-coil conformation. Residues 190–221 (RFEKVQAKLMESKHALFKPLINALTQLASKVD) constitute a propeptide that is removed on maturation. The stretch at 244–352 (ASLLATEERQ…EVLTQKLSAA (109 aa)) forms a coiled coil.

It belongs to the TMP family. In terms of processing, two components are produced by post-translational processing from the precursor peptide.

It is found in the trichocyst. In terms of biological role, structural protein that crystallize inside the trichocyst matrix. This Paramecium tetraurelia protein is Trichocyst matrix protein T4-A (T4A).